A 178-amino-acid polypeptide reads, in one-letter code: ATP synthase subunit delta (178 aa).

This sequence belongs to the ATPase delta chain family. As to quaternary structure, F-type ATPases have 2 components, F(1) - the catalytic core - and F(0) - the membrane proton channel. F(1) has five subunits: alpha(3), beta(3), gamma(1), delta(1), epsilon(1). F(0) has three main subunits: a(1), b(2) and c(10-14). The alpha and beta chains form an alternating ring which encloses part of the gamma chain. F(1) is attached to F(0) by a central stalk formed by the gamma and epsilon chains, while a peripheral stalk is formed by the delta and b chains.

The protein resides in the cell membrane. Its function is as follows. F(1)F(0) ATP synthase produces ATP from ADP in the presence of a proton or sodium gradient. F-type ATPases consist of two structural domains, F(1) containing the extramembraneous catalytic core and F(0) containing the membrane proton channel, linked together by a central stalk and a peripheral stalk. During catalysis, ATP synthesis in the catalytic domain of F(1) is coupled via a rotary mechanism of the central stalk subunits to proton translocation. Functionally, this protein is part of the stalk that links CF(0) to CF(1). It either transmits conformational changes from CF(0) to CF(1) or is implicated in proton conduction. The chain is ATP synthase subunit delta from Desulfitobacterium hafniense (strain Y51).